Reading from the N-terminus, the 309-residue chain is Porphobilinogen deaminase (309 aa).

Cysteine 241 carries the post-translational modification S-(dipyrrolylmethanemethyl)cysteine.

This sequence belongs to the HMBS family. As to quaternary structure, monomer. Dipyrromethane serves as cofactor.

It catalyses the reaction 4 porphobilinogen + H2O = hydroxymethylbilane + 4 NH4(+). It functions in the pathway porphyrin-containing compound metabolism; protoporphyrin-IX biosynthesis; coproporphyrinogen-III from 5-aminolevulinate: step 2/4. Its function is as follows. Tetrapolymerization of the monopyrrole PBG into the hydroxymethylbilane pre-uroporphyrinogen in several discrete steps. The sequence is that of Porphobilinogen deaminase from Bacillus cereus (strain ZK / E33L).